Reading from the N-terminus, the 139-residue chain is Actin-depolymerizing factor 3 (139 aa).

Positions 7–139 (GVAVNDECML…SLDEIKDRAR (133 aa)) constitute an ADF-H domain.

The protein belongs to the actin-binding proteins ADF family. In terms of tissue distribution, expressed in all tissues except pollen.

It localises to the cytoplasm. Functionally, actin-depolymerizing protein. Severs actin filaments (F-actin) and binds to actin monomers. The sequence is that of Actin-depolymerizing factor 3 (ADF3) from Zea mays (Maize).